Here is an 866-residue protein sequence, read N- to C-terminus: Paramyosin (866 aa).

The segment at 1–22 (MMNHDTESHVKISRTIYRGVSP) is nonhelical region. Residues 23–839 (STTRLESRVR…AERTVTVRRV (817 aa)) adopt a coiled-coil conformation. Positions 840 to 866 (GPGGRAVSVARELSVTSNRGMRATSMM) are nonhelical region.

It belongs to the paramyosin family. As to quaternary structure, homodimer.

It is found in the cytoplasm. Its subcellular location is the myofibril. In terms of biological role, paramyosin is a major structural component of many thick filaments isolated from invertebrate muscles. This chain is Paramyosin, found in Schistosoma japonicum (Blood fluke).